The primary structure comprises 467 residues: 3-isopropylmalate dehydratase large subunit (467 aa).

3 residues coordinate [4Fe-4S] cluster: C349, C409, and C412.

Belongs to the aconitase/IPM isomerase family. LeuC type 1 subfamily. Heterodimer of LeuC and LeuD. The cofactor is [4Fe-4S] cluster.

The enzyme catalyses (2R,3S)-3-isopropylmalate = (2S)-2-isopropylmalate. The protein operates within amino-acid biosynthesis; L-leucine biosynthesis; L-leucine from 3-methyl-2-oxobutanoate: step 2/4. Functionally, catalyzes the isomerization between 2-isopropylmalate and 3-isopropylmalate, via the formation of 2-isopropylmaleate. The protein is 3-isopropylmalate dehydratase large subunit of Ruegeria sp. (strain TM1040) (Silicibacter sp.).